A 475-amino-acid chain; its full sequence is Putative poly(A) polymerase catalytic subunit (475 aa).

The protein belongs to the poxviridae poly(A) polymerase catalytic subunit family. Highly divergent.

Its subcellular location is the virion. It catalyses the reaction RNA(n) + ATP = RNA(n)-3'-adenine ribonucleotide + diphosphate. Its function is as follows. Polymerase that creates the 3'-poly(A) tail of mRNA's. The polypeptide is Putative poly(A) polymerase catalytic subunit (Ornithodoros (relapsing fever ticks)).